Reading from the N-terminus, the 918-residue chain is Cell surface glycoprotein 1 (918 aa).

Residues 1 to 34 (MTDTNEKIRSLFLTALMVFSVFAGTIAFSGGAAA) form the signal peptide. 7 N-linked (GlcNAc...) asparagine glycosylation sites follow: N37, N56, N110, N219, N250, N261, and N291. N306 carries N-linked (GalNAc...) asparagine glycosylation. N-linked (GlcNAc...) asparagine glycans are attached at residues N318, N343, N392, N434, N487, N541, N555, N572, N585, N614, N715, N776, N836, and N845. Residues 815-894 (HQDTNGNEAY…DESETTAAEG (80 aa)) are disordered. Over residues 833–846 (YTQNGSAVTDSANV) the composition is skewed to polar residues. The span at 849–875 (VEEEQTEAPDTETETEAPDTETEEETD) shows a compositional bias: acidic residues. The helical transmembrane segment at 894–914 (GPGFTAAIALIALVAAALLAV) threads the bilayer. Residues 895-897 (PGF) carry the PGF sorting signal motif.

The protein belongs to the halobacterial S-layer protein family. In terms of processing, N-glycosylated on Asn-306; this N-linked glycan is a branched trisaccharide containing 2-amino-6-sulfo-2,6-dideoxy-glucose (sulfoquinovosamine). Post-translationally, cleaved by the archaeosortase ArtA at the C-terminus, with removal of a short hydrophobic segment. Lipidation.

It is found in the secreted. The protein resides in the cell wall. Its subcellular location is the S-layer. The protein localises to the cell membrane. S-layer protein. The S-layer is a paracrystalline mono-layered assembly of proteins which coat the surface of the cell. In H.hispanica, the S-layer contains two different glycoproteins, Slg1 and Slg2, which share highly similar amino acid sequences. The chain is Cell surface glycoprotein 1 from Haloarcula hispanica (strain ATCC 33960 / DSM 4426 / JCM 8911 / NBRC 102182 / NCIMB 2187 / VKM B-1755).